A 275-amino-acid chain; its full sequence is Activator of basal transcription 1 (275 aa).

Met1 is modified (N-acetylmethionine). 2 stretches are compositionally biased toward acidic residues: residues 1–10 (MEVEGLELDT) and 25–34 (AEEEQEESED). The disordered stretch occupies residues 1 to 39 (MEVEGLELDTAELGPLEGSHQKLEAEEEQEESEDAAGGS). The RRM domain maps to 46 to 145 (GIVYLGHIPP…RRRSPFRYDL (100 aa)). The stretch at 164–194 (AFERQVRRQRLRAEVAQAKRETDFYLRSVER) forms a coiled coil. A disordered region spans residues 200 to 275 (AADGDSTRPN…RGNSSPARNS (76 aa)). The segment covering 262 to 275 (PSESRGNSSPARNS) has biased composition (polar residues).

This sequence belongs to the ESF2/ABP1 family. Interacts with ESF1/ABTAP. Interacts with IGHMBP2.

The protein localises to the nucleus. The protein resides in the nucleolus. Its function is as follows. Could be a novel TATA-binding protein (TBP) which can function as a basal transcription activator. Can act as a regulator of basal transcription for class II genes. The protein is Activator of basal transcription 1 (ABT1) of Bos taurus (Bovine).